The primary structure comprises 279 residues: Protein COP1 SUPPRESSOR 2 (279 aa).

Disordered regions lie at residues 1 to 29 (MPPK…ISEE) and 57 to 79 (SSTA…EGEK). Residues 68–79 (KPVEKTETEGEK) show a composition bias toward basic and acidic residues. Residues 86 to 183 (DTFAQETAVL…EETEAAKKLL (98 aa)) are a coiled coil. Positions 217 to 229 (LRREHPELYKDRG) are enriched in basic and acidic residues. A disordered region spans residues 217–279 (LRREHPELYK…KRERNRVMRR (63 aa)). Residues 250 to 260 (ADSGKSRQAAT) show a composition bias toward polar residues. Residues 270–279 (KRERNRVMRR) are compositionally biased toward basic residues.

The protein belongs to the TLS1 family. In terms of assembly, interacts with COP1.

The protein resides in the nucleus. It is found in the nucleus speckle. Functionally, inhibits E3 ubiquitin-protein ligase activity of COP1, a central repressor of seedling photomorphogenesis. Represses COP1-mediated turnover of HY5 in the dark. Required for primary root development under normal light growth conditions. This chain is Protein COP1 SUPPRESSOR 2, found in Arabidopsis thaliana (Mouse-ear cress).